A 277-amino-acid polypeptide reads, in one-letter code: Pantothenate synthetase (277 aa).

Residue 26–33 (MGYLHQGH) coordinates ATP. H33 acts as the Proton donor in catalysis. Q57 lines the (R)-pantoate pocket. Q57 contributes to the beta-alanine binding site. Position 143–146 (143–146 (GQKD)) interacts with ATP. Position 149 (Q149) interacts with (R)-pantoate. Residues V172 and 180 to 183 (LSSR) each bind ATP.

The protein belongs to the pantothenate synthetase family. Homodimer.

The protein resides in the cytoplasm. The enzyme catalyses (R)-pantoate + beta-alanine + ATP = (R)-pantothenate + AMP + diphosphate + H(+). It participates in cofactor biosynthesis; (R)-pantothenate biosynthesis; (R)-pantothenate from (R)-pantoate and beta-alanine: step 1/1. Functionally, catalyzes the condensation of pantoate with beta-alanine in an ATP-dependent reaction via a pantoyl-adenylate intermediate. This chain is Pantothenate synthetase, found in Chloroflexus aggregans (strain MD-66 / DSM 9485).